We begin with the raw amino-acid sequence, 158 residues long: Toxin Tse2 (158 aa).

In terms of assembly, forms a heterotetramer with Tsi2 consisting of two Tse2 dimers and two Tsi2 dimers. Formation of the complex inactivates Tse2 enzymatic activity.

It is found in the secreted. Toxin secreted by the H1 type VI (H1-T6SS) secretion system into the cytoplasm of recipient cells. Acts likely as a NAD-dependent cytotoxin towards both prokaryotic and eukaryotic cells. The protein is Toxin Tse2 of Pseudomonas aeruginosa (strain ATCC 15692 / DSM 22644 / CIP 104116 / JCM 14847 / LMG 12228 / 1C / PRS 101 / PAO1).